The primary structure comprises 224 residues: ATP phosphoribosyltransferase (224 aa).

It belongs to the ATP phosphoribosyltransferase family. Short subfamily. Heteromultimer composed of HisG and HisZ subunits.

The protein localises to the cytoplasm. The catalysed reaction is 1-(5-phospho-beta-D-ribosyl)-ATP + diphosphate = 5-phospho-alpha-D-ribose 1-diphosphate + ATP. The protein operates within amino-acid biosynthesis; L-histidine biosynthesis; L-histidine from 5-phospho-alpha-D-ribose 1-diphosphate: step 1/9. Its function is as follows. Catalyzes the condensation of ATP and 5-phosphoribose 1-diphosphate to form N'-(5'-phosphoribosyl)-ATP (PR-ATP). Has a crucial role in the pathway because the rate of histidine biosynthesis seems to be controlled primarily by regulation of HisG enzymatic activity. This is ATP phosphoribosyltransferase from Cupriavidus metallidurans (strain ATCC 43123 / DSM 2839 / NBRC 102507 / CH34) (Ralstonia metallidurans).